A 111-amino-acid chain; its full sequence is Disintegrin piscivostatin-alpha (111 aa).

Positions methionine 1–serine 20 are cleaved as a signal peptide. The propeptide occupies isoleucine 21 to lysine 44. One can recognise a Disintegrin domain in the interval glycine 45–alanine 111. Intrachain disulfides connect cysteine 53–cysteine 76, cysteine 67–cysteine 73, cysteine 72–cysteine 97, and cysteine 85–cysteine 104. Positions arginine 89 to aspartate 91 match the Cell attachment site motif. Residues tyrosine 110–alanine 111 constitute a propeptide that is removed on maturation.

It belongs to the disintegrin family. Dimeric disintegrin subfamily. As to quaternary structure, heterodimer with piscivostatin-beta; disulfide-linked. In terms of tissue distribution, expressed by the venom gland.

It is found in the secreted. Inhibits fibrinogen interaction with platelets. Acts by binding to alpha-IIb/beta-3 (ITGA2B/ITGB3) on the platelet surface and inhibits both ADP-induced platelet aggregation and platelet aggregate dissociation in human platelet-rich plasma. The polypeptide is Disintegrin piscivostatin-alpha (Agkistrodon piscivorus piscivorus (Eastern cottonmouth)).